The sequence spans 786 residues: Protein RDM16 (786 aa).

Composition is skewed to basic and acidic residues over residues 1–80 (MDKE…SRDR), 87–112 (RSHEGSKEKESRSKRKDREEENGARD), and 123–143 (NGERRSRFEDVAIEVENKDAQ). Disordered stretches follow at residues 1-223 (MDKE…SANL), 255-283 (KKATKPTSEGSPHTRVPPSTTTPAVSTGT), 532-557 (RPIEPPAEAAPPPPQPLKLTKKEQKK), and 616-642 (EREQAHTDRNAARKLTPAEKREKKERK). Positions 145–164 (SEGSGATNPTSGVTMGASTY) are enriched in polar residues. Residues 165–176 (SSIPSEASAAPS) are compositionally biased toward low complexity. Polar residues predominate over residues 177–189 (QTLLTKVSSISTT). The span at 190–203 (DENKASVVRSHEVP) shows a compositional bias: basic and acidic residues. The span at 268 to 283 (TRVPPSTTTPAVSTGT) shows a compositional bias: low complexity. Pro residues predominate over residues 534–547 (IEPPAEAAPPPPQP).

Its subcellular location is the nucleus. The protein resides in the nucleoplasm. In terms of biological role, functions in the RNA-directed DNA methylation (RdDM) pathway. Acts as a pre-mRNA splicing factor, likely by affecting Pol V transcripts. Affects DNA methylation of transposable elements (TEs) and preferentially influences NRPD1- and ROS1-targeted loci. This chain is Protein RDM16, found in Arabidopsis thaliana (Mouse-ear cress).